The chain runs to 224 residues: Inhibitor of apoptosis protein (224 aa).

Residues 29–92 (VDARNKSFAI…GFWSRNCGFM (64 aa)) form a BIR repeat. The Zn(2+) site is built by Cys-62, Cys-65, His-82, and Cys-89. A C4-type zinc finger spans residues 189–207 (CMTCGIEQINKDENFCSAC).

The protein belongs to the asfivirus IAP family. Interacts with subunit p17 of host CASP3.

The protein resides in the host cytoplasm. It is found in the virion. Functionally, prevents apoptosis of host cell by inhibiting caspase-3/CASP3 activation to promote the viral replication. Also induces the activation of host NF-kappaB. The polypeptide is Inhibitor of apoptosis protein (Ornithodoros (relapsing fever ticks)).